Here is a 374-residue protein sequence, read N- to C-terminus: Flavonoid O-methyltransferase-like protein Os11g0303600 (374 aa).

Positions 242, 262, 263, and 276 each coordinate S-adenosyl-L-homocysteine. Residue histidine 280 is the Proton acceptor of the active site.

It belongs to the class I-like SAM-binding methyltransferase superfamily. Cation-independent O-methyltransferase family. COMT subfamily.

The sequence is that of Flavonoid O-methyltransferase-like protein Os11g0303600 from Oryza sativa subsp. japonica (Rice).